We begin with the raw amino-acid sequence, 217 residues long: Adapter protein MecA (217 aa).

The protein belongs to the MecA family. Homodimer.

Enables the recognition and targeting of unfolded and aggregated proteins to the ClpC protease or to other proteins involved in proteolysis. This Listeria innocua serovar 6a (strain ATCC BAA-680 / CLIP 11262) protein is Adapter protein MecA.